The primary structure comprises 428 residues: Spermidine/putrescine import ATP-binding protein PotA (428 aa).

The region spanning 6–238 is the ABC transporter domain; it reads IEFKNVSKTY…PINHFVADFI (233 aa). 40–47 contacts ATP; sequence GASGSGKS.

Belongs to the ABC transporter superfamily. Spermidine/putrescine importer (TC 3.A.1.11.1) family. The complex is composed of two ATP-binding proteins (PotA), two transmembrane proteins (PotB and PotC) and a solute-binding protein (PotD).

Its subcellular location is the cell membrane. It catalyses the reaction ATP + H2O + polyamine-[polyamine-binding protein]Side 1 = ADP + phosphate + polyamineSide 2 + [polyamine-binding protein]Side 1.. Part of the ABC transporter complex PotABCD involved in spermidine/putrescine import. Responsible for energy coupling to the transport system. In Lactococcus lactis subsp. lactis (strain IL1403) (Streptococcus lactis), this protein is Spermidine/putrescine import ATP-binding protein PotA.